A 124-amino-acid polypeptide reads, in one-letter code: Ragulator complex protein LAMTOR2 homolog (124 aa).

It belongs to the GAMAD family. In terms of assembly, part of the Ragulator complex.

Its function is as follows. Regulator of the TOR pathway, a signaling cascade that promotes cell growth in response to growth factors, energy levels, and amino acids. May activate the TOR signaling cascade in response to amino acids. This is Ragulator complex protein LAMTOR2 homolog from Caenorhabditis elegans.